A 324-amino-acid chain; its full sequence is NADH-ubiquinone oxidoreductase chain 1 (324 aa).

The next 8 helical transmembrane spans lie at 9 to 29, 75 to 95, 106 to 126, 142 to 162, 177 to 197, 228 to 248, 259 to 279, and 300 to 320; these read LTMA…LTLV, ILFI…WIPL, LGLL…LWSG, VAQT…VIML, PLYL…STLA, LFFL…AILF, ELFP…FLWV, and LPLT…YAGI.

This sequence belongs to the complex I subunit 1 family.

It localises to the mitochondrion inner membrane. The catalysed reaction is a ubiquinone + NADH + 5 H(+)(in) = a ubiquinol + NAD(+) + 4 H(+)(out). Its function is as follows. Core subunit of the mitochondrial membrane respiratory chain NADH dehydrogenase (Complex I) that is believed to belong to the minimal assembly required for catalysis. Complex I functions in the transfer of electrons from NADH to the respiratory chain. The immediate electron acceptor for the enzyme is believed to be ubiquinone. The protein is NADH-ubiquinone oxidoreductase chain 1 (MT-ND1) of Struthio camelus (Common ostrich).